The chain runs to 85 residues: Conotoxin Im28.1 (85 aa).

The signal sequence occupies residues 1 to 21 (MPKLEMMLLVLLILPLCYIDA). The propeptide occupies 22 to 40 (VGPPPPWNMEDEIIEHWQK).

This sequence belongs to the conotoxin D superfamily. In terms of processing, contains 5 disulfide bonds. In terms of tissue distribution, expressed by the venom duct.

It localises to the secreted. Functionally, probable neurotoxin. This is Conotoxin Im28.1 from Conus imperialis (Imperial cone).